Here is a 1199-residue protein sequence, read N- to C-terminus: Tubulin-specific chaperone D (1199 aa).

2 disordered regions span residues 1–23 (MALS…VEDA) and 337–361 (QHSI…QDDV). Over residues 14 to 23 (DPVEDPVEDA) the composition is skewed to acidic residues. HEAT repeat units follow at residues 368–406 (VIEQ…ADDV), 603–639 (EHTA…ARSL), 757–793 (AAAQ…PAFF), and 1111–1147 (GDVR…VLTY).

This sequence belongs to the TBCD family. In terms of assembly, found in a complex with at least ARL2, PPP2CB, PPP2R1A, PPP2R2A, PPP2R5E and TBCD. Interacts with PPP2CB. Part of a supercomplex made of cofactors A to E. Cofactors A and D function by capturing and stabilizing tubulin in a quasi-native conformation. Cofactor E binds to the cofactor D-tubulin complex; interaction with cofactor C then causes the release of tubulin polypeptides that are committed to the native state. Interacts with ARL2; interaction is enhanced with the GDP-bound form of ARL2. Does not interact with ARL3, ARL4A and ARL4D. Interacts with beta tubulin. Interacts with TBCE.

It localises to the cell junction. Its subcellular location is the tight junction. The protein localises to the lateral cell membrane. The protein resides in the cytoplasm. It is found in the adherens junction. It localises to the cytoskeleton. Its subcellular location is the microtubule organizing center. The protein localises to the centrosome. In terms of biological role, tubulin-folding protein implicated in the first step of the tubulin folding pathway and required for tubulin complex assembly. Involved in the regulation of microtubule polymerization or depolymerization, it modulates microtubule dynamics by capturing GTP-bound beta-tubulin (TUBB). Its ability to interact with beta tubulin is regulated via its interaction with ARL2. Acts as a GTPase-activating protein (GAP) for ARL2. Induces microtubule disruption in absence of ARL2. Increases degradation of beta tubulin, when overexpressed in polarized cells. Promotes epithelial cell detachment, a process antagonized by ARL2. Induces tight adherens and tight junctions disassembly at the lateral cell membrane. Required for correct assembly and maintenance of the mitotic spindle, and proper progression of mitosis. Involved in neuron morphogenesis. This chain is Tubulin-specific chaperone D (TBCD), found in Bos taurus (Bovine).